We begin with the raw amino-acid sequence, 988 residues long: Putative disease resistance protein RGA4 (988 aa).

The NB-ARC domain occupies 137 to 439 (AAAATRETGF…MAHGFLLSKG (303 aa)). 184 to 191 (GMGGLGKT) is an ATP binding site. LRR repeat units lie at residues 526–548 (FVSL…SIGD), 549–572 (LLHL…LCKL), 574–595 (NLQT…QTSK), 596–620 (LSSL…GLLT), 638–662 (LGEL…KNDT), 674–696 (LQSL…EVKV), 751–776 (LPCL…DVHS), 784–808 (FPSL…EGEE), 829–851 (LSSV…SISN), 852–876 (LSTL…MFTS), 878–900 (TNLE…SLTS), 901–925 (LNAL…GLEG), 927–950 (TSLT…LQHL), and 966–988 (KRCD…LDIH).

The protein belongs to the disease resistance NB-LRR family.

In terms of biological role, disease resistance protein. Resistance proteins guard the plant against pathogens that contain an appropriate avirulence protein via a direct or indirect interaction with this avirulence protein. That triggers a defense system which restricts the pathogen growth. This is Putative disease resistance protein RGA4 (RGA4) from Solanum bulbocastanum (Wild potato).